We begin with the raw amino-acid sequence, 29 residues long: Cytochrome b6-f complex subunit 8 (29 aa).

Residues 3–23 (ILTLGWVSVLTLFTYSIAMVV) form a helical membrane-spanning segment.

It belongs to the PetN family. The 4 large subunits of the cytochrome b6-f complex are cytochrome b6, subunit IV (17 kDa polypeptide, PetD), cytochrome f and the Rieske protein, while the 4 small subunits are PetG, PetL, PetM and PetN. The complex functions as a dimer.

It localises to the cellular thylakoid membrane. Its function is as follows. Component of the cytochrome b6-f complex, which mediates electron transfer between photosystem II (PSII) and photosystem I (PSI), cyclic electron flow around PSI, and state transitions. The chain is Cytochrome b6-f complex subunit 8 from Acaryochloris marina (strain MBIC 11017).